The following is a 428-amino-acid chain: MNTKRSEEIFGAAKNLMPGGVSSPVRAFKSVEGDPIVFDRVKGPYAWDVDGNRYIDYVGSWGPAICGHAHPEVIAALQETLEKGTSFGAPCVLENQLAEMVIDAVPSVEMVRFVNSGTEACMAVLRLMRAFTGRDKVIKFEGCYHGHADMFLVKAGSGVATLGLPDSPGVPRSTTANTLTAPYNDLEAVKELFAENPDAISGVILEPVVGNAGFITPEPGFLEGLREVTQENGALLVFDEVMTGFRISYGGAQERFGVTPDLTTMGKVIGGGLPVGAYGGRKEIMSMVSPSGPMYQAGTLSGNPLAMTAGIKTLELLKQEGTYEKLEALTKKLLDGILTAAKESNIPIYGQSISAMFGFYLCEGPVRNFEEAKSSDTELFSKIHRLMLQKGVYLAPSAFEAGFTSLAHSEDDINATIKAFQEIFSEIS.

K267 carries the N6-(pyridoxal phosphate)lysine modification.

It belongs to the class-III pyridoxal-phosphate-dependent aminotransferase family. HemL subfamily. As to quaternary structure, homodimer. Requires pyridoxal 5'-phosphate as cofactor.

Its subcellular location is the cytoplasm. It carries out the reaction (S)-4-amino-5-oxopentanoate = 5-aminolevulinate. The protein operates within porphyrin-containing compound metabolism; protoporphyrin-IX biosynthesis; 5-aminolevulinate from L-glutamyl-tRNA(Glu): step 2/2. It functions in the pathway porphyrin-containing compound metabolism; chlorophyll biosynthesis. This is Glutamate-1-semialdehyde 2,1-aminomutase from Prochlorococcus marinus (strain NATL1A).